The primary structure comprises 402 residues: Cysteine-rich venom protein (402 aa).

Residues 1–13 form the signal peptide; it reads MNLALFIIFATIF. In terms of domain architecture, SCP spans 57–199; the sequence is LETHNQLRNK…VKKVLYTCNY (143 aa).

It belongs to the CRISP family. Contains 7 disulfide bonds. In terms of tissue distribution, expressed by the venom gland.

It localises to the secreted. In Tityus serrulatus (Brazilian scorpion), this protein is Cysteine-rich venom protein.